A 287-amino-acid chain; its full sequence is Cyclopropane mycolic acid synthase 1 (287 aa).

S-adenosyl-L-methionine-binding positions include 33-34 (YS), 68-76 (LLDVGCGWG), 94-99 (TLSKNQ), and 123-124 (WE). Residue cysteine 269 is part of the active site.

The protein belongs to the CFA/CMAS family. In terms of assembly, homodimer.

The protein resides in the cytoplasm. It catalyses the reaction a 1-acyl-2-(9Z)-enoyl-sn-glycero-3-phospholipid + S-adenosyl-L-methionine = a 1-acyl-2-(9-cyclopronane)-acyl-sn-glycero-3-phospholipid + S-adenosyl-L-homocysteine + H(+). The protein operates within lipid metabolism; mycolic acid biosynthesis. Functionally, catalyzes the conversion of a double bond to a cyclopropane ring at the distal position of an alpha mycolic acid via the transfer of a methylene group from S-adenosyl-L-methionine. Cyclopropanated mycolic acids are key factors participating in cell envelope permeability, host immunomodulation and persistence. The sequence is that of Cyclopropane mycolic acid synthase 1 (cmaA1) from Mycobacterium tuberculosis (strain ATCC 25177 / H37Ra).